Reading from the N-terminus, the 312-residue chain is tRNA dimethylallyltransferase (312 aa).

10 to 17 (GPTASGKS) contacts ATP. 12–17 (TASGKS) lines the substrate pocket. The segment at 35-38 (DSKQ) is interaction with substrate tRNA.

The protein belongs to the IPP transferase family. Monomer. Requires Mg(2+) as cofactor.

It catalyses the reaction adenosine(37) in tRNA + dimethylallyl diphosphate = N(6)-dimethylallyladenosine(37) in tRNA + diphosphate. Catalyzes the transfer of a dimethylallyl group onto the adenine at position 37 in tRNAs that read codons beginning with uridine, leading to the formation of N6-(dimethylallyl)adenosine (i(6)A). This Anaplasma phagocytophilum (strain HZ) protein is tRNA dimethylallyltransferase.